Consider the following 109-residue polypeptide: Large ribosomal subunit protein uL22 (109 aa).

It belongs to the universal ribosomal protein uL22 family. Part of the 50S ribosomal subunit.

Functionally, this protein binds specifically to 23S rRNA; its binding is stimulated by other ribosomal proteins, e.g. L4, L17, and L20. It is important during the early stages of 50S assembly. It makes multiple contacts with different domains of the 23S rRNA in the assembled 50S subunit and ribosome. In terms of biological role, the globular domain of the protein is located near the polypeptide exit tunnel on the outside of the subunit, while an extended beta-hairpin is found that lines the wall of the exit tunnel in the center of the 70S ribosome. This Thiobacillus denitrificans (strain ATCC 25259 / T1) protein is Large ribosomal subunit protein uL22.